The following is a 110-amino-acid chain: UPF0122 protein SAR1212 (110 aa).

Belongs to the UPF0122 family.

Might take part in the signal recognition particle (SRP) pathway. This is inferred from the conservation of its genetic proximity to ftsY/ffh. May be a regulatory protein. This Staphylococcus aureus (strain MRSA252) protein is UPF0122 protein SAR1212.